Here is a 377-residue protein sequence, read N- to C-terminus: Succinyl-diaminopimelate desuccinylase (377 aa).

Zn(2+) is bound at residue histidine 66. Aspartate 68 is an active-site residue. Aspartate 99 contacts Zn(2+). Residue glutamate 133 is the Proton acceptor of the active site. Zn(2+) is bound by residues glutamate 134, glutamate 162, and histidine 348.

This sequence belongs to the peptidase M20A family. DapE subfamily. In terms of assembly, homodimer. Zn(2+) serves as cofactor. Requires Co(2+) as cofactor.

The catalysed reaction is N-succinyl-(2S,6S)-2,6-diaminopimelate + H2O = (2S,6S)-2,6-diaminopimelate + succinate. The protein operates within amino-acid biosynthesis; L-lysine biosynthesis via DAP pathway; LL-2,6-diaminopimelate from (S)-tetrahydrodipicolinate (succinylase route): step 3/3. In terms of biological role, catalyzes the hydrolysis of N-succinyl-L,L-diaminopimelic acid (SDAP), forming succinate and LL-2,6-diaminopimelate (DAP), an intermediate involved in the bacterial biosynthesis of lysine and meso-diaminopimelic acid, an essential component of bacterial cell walls. This is Succinyl-diaminopimelate desuccinylase from Chromobacterium violaceum (strain ATCC 12472 / DSM 30191 / JCM 1249 / CCUG 213 / NBRC 12614 / NCIMB 9131 / NCTC 9757 / MK).